The following is a 728-amino-acid chain: Catalase-peroxidase (728 aa).

The tryptophyl-tyrosyl-methioninium (Trp-Tyr) (with M-244) cross-link spans W91 to Y218. H92 serves as the catalytic Proton acceptor. The segment at residues Y218–M244 is a cross-link (tryptophyl-tyrosyl-methioninium (Tyr-Met) (with W-91)). H259 serves as a coordination point for heme b.

The protein belongs to the peroxidase family. Peroxidase/catalase subfamily. As to quaternary structure, homodimer or homotetramer. It depends on heme b as a cofactor. Post-translationally, formation of the three residue Trp-Tyr-Met cross-link is important for the catalase, but not the peroxidase activity of the enzyme.

The catalysed reaction is H2O2 + AH2 = A + 2 H2O. It catalyses the reaction 2 H2O2 = O2 + 2 H2O. Its function is as follows. Bifunctional enzyme with both catalase and broad-spectrum peroxidase activity. The sequence is that of Catalase-peroxidase from Burkholderia mallei (strain NCTC 10247).